Consider the following 422-residue polypeptide: UPF0761 membrane protein Paes_1471 (422 aa).

The next 6 membrane-spanning stretches (helical) occupy residues 47–67 (LLSI…SPVF), 103–123 (SVPT…ISTI), 143–163 (FTLY…SLVA), 185–205 (LLLL…ILVP), 208–228 (KVKF…FEFS), and 247–267 (GALS…VVAL).

The protein belongs to the UPF0761 family.

Its subcellular location is the cell inner membrane. The sequence is that of UPF0761 membrane protein Paes_1471 from Prosthecochloris aestuarii (strain DSM 271 / SK 413).